Here is a 321-residue protein sequence, read N- to C-terminus: Glucokinase (321 aa).

8–13 (GDVGGT) lines the ATP pocket.

This sequence belongs to the bacterial glucokinase family.

The protein resides in the cytoplasm. The catalysed reaction is D-glucose + ATP = D-glucose 6-phosphate + ADP + H(+). Not highly important in E.coli as glucose is transported into the cell by the PTS system already as glucose 6-phosphate. The polypeptide is Glucokinase (Escherichia coli O139:H28 (strain E24377A / ETEC)).